A 183-amino-acid chain; its full sequence is Probable apo-citrate lyase phosphoribosyl-dephospho-CoA transferase (183 aa).

It belongs to the CitX family.

It carries out the reaction apo-[citrate lyase ACP] + 2'-(5''-triphospho-alpha-D-ribosyl)-3'-dephospho-CoA = holo-[citrate lyase ACP] + diphosphate. In terms of biological role, transfers 2-(5''-triphosphoribosyl)-3'-dephosphocoenzyme-A on a serine residue to the apo-acyl carrier protein (gamma chain) of the citrate lyase to yield holo-acyl carrier protein. The sequence is that of Probable apo-citrate lyase phosphoribosyl-dephospho-CoA transferase from Escherichia coli (strain 55989 / EAEC).